A 179-amino-acid polypeptide reads, in one-letter code: Large ribosomal subunit protein uL6 (179 aa).

It belongs to the universal ribosomal protein uL6 family. Part of the 50S ribosomal subunit.

This protein binds to the 23S rRNA, and is important in its secondary structure. It is located near the subunit interface in the base of the L7/L12 stalk, and near the tRNA binding site of the peptidyltransferase center. This is Large ribosomal subunit protein uL6 from Acidothermus cellulolyticus (strain ATCC 43068 / DSM 8971 / 11B).